Consider the following 224-residue polypeptide: Small ribosomal subunit protein uS3 (224 aa).

The 70-residue stretch at 20-89 (LDEFLANYFK…NVNITVSPVP (70 aa)) folds into the KH type-2 domain.

The protein belongs to the universal ribosomal protein uS3 family. Part of the 30S ribosomal subunit.

Its function is as follows. Binds the lower part of the 30S subunit head. This chain is Small ribosomal subunit protein uS3, found in Staphylothermus marinus (strain ATCC 43588 / DSM 3639 / JCM 9404 / F1).